The primary structure comprises 138 residues: RYQELTVLLLLLLEGGSWGASPLRPLCRPTNATLAAESDACPVCVTFTTTICAGYCPSMVRVLPAALPPSPQLVCTYRELSFSSIRLPGCPPGVDPIFSFPVALSCSCGSCRLSHSDCGGPRAQPHLCTRPHLSLRLL.

Positions 1-19 are cleaved as a signal peptide; it reads RYQELTVLLLLLLEGGSWG. Intrachain disulfides connect Cys-27/Cys-75, Cys-41/Cys-90, Cys-44/Cys-128, Cys-52/Cys-106, Cys-56/Cys-108, and Cys-111/Cys-118. N-linked (GlcNAc...) asparagine glycosylation occurs at Asn-31.

This sequence belongs to the glycoprotein hormones subunit beta family. Heterodimer of a common alpha chain and a unique beta chain which confers biological specificity to thyrotropin, lutropin, follitropin and gonadotropin.

It is found in the secreted. Functionally, promotes spermatogenesis and ovulation by stimulating the testes and ovaries to synthesize steroids. This Osphranter rufus (Red kangaroo) protein is Lutropin subunit beta (LHB).